Reading from the N-terminus, the 153-residue chain is TM2 domain-containing protein DDB_G0277895 (153 aa).

The 48-residue stretch at 3–50 folds into the TM2 domain; sequence QKSVCVTYLLWLFFGLFGIHRFYLNRPCSGVLYLFTCGCFFIGWFIDI. Transmembrane regions (helical) follow at residues 6-26 and 33-53; these read VCVTYLLWLFFGLFGIHRFYL and VLYLFTCGCFFIGWFIDICLI. Residues 85-153 form a disordered region; sequence GSPQQQPYGA…GNYPPPYGPQ (69 aa). Tandem repeats lie at residues 89-96, 97-104, 105-112, 113-120, 121-128, and 129-136. The tract at residues 89–136 is 6 X 8 AA tandem repeat of Q-Q-P-Y-G-A-P-P; sequence QQPYGAPPQQPYGAPPQQPYGAPPQQPYGAPPQQPYGAPPPQPYGAPP. The segment covering 93 to 153 has biased composition (pro residues); that stretch reads GAPPQQPYGA…GNYPPPYGPQ (61 aa).

This sequence belongs to the TM2 family.

The protein resides in the membrane. The sequence is that of TM2 domain-containing protein DDB_G0277895 from Dictyostelium discoideum (Social amoeba).